Consider the following 190-residue polypeptide: Peptidyl-tRNA hydrolase (190 aa).

TRNA is bound at residue Tyr-19. Catalysis depends on His-24, which acts as the Proton acceptor. The tRNA site is built by Tyr-72, Asn-74, and Asn-121.

It belongs to the PTH family.

It localises to the mitochondrion. The catalysed reaction is an N-acyl-L-alpha-aminoacyl-tRNA + H2O = an N-acyl-L-amino acid + a tRNA + H(+). Peptidyl-tRNA hydrolase involved in the recycling of tRNA-Lys from diacetyl-lysyl-tRNA-Lys and is important for mitochondrial function. This chain is Peptidyl-tRNA hydrolase (PTH1), found in Saccharomyces cerevisiae (strain ATCC 204508 / S288c) (Baker's yeast).